The chain runs to 258 residues: Ribosomal RNA small subunit methyltransferase A (258 aa).

6 residues coordinate S-adenosyl-L-methionine: histidine 13, leucine 15, glycine 40, glutamate 61, aspartate 86, and asparagine 106.

The protein belongs to the class I-like SAM-binding methyltransferase superfamily. rRNA adenine N(6)-methyltransferase family. RsmA subfamily.

Its subcellular location is the cytoplasm. It catalyses the reaction adenosine(1518)/adenosine(1519) in 16S rRNA + 4 S-adenosyl-L-methionine = N(6)-dimethyladenosine(1518)/N(6)-dimethyladenosine(1519) in 16S rRNA + 4 S-adenosyl-L-homocysteine + 4 H(+). In terms of biological role, specifically dimethylates two adjacent adenosines (A1518 and A1519) in the loop of a conserved hairpin near the 3'-end of 16S rRNA in the 30S particle. May play a critical role in biogenesis of 30S subunits. The sequence is that of Ribosomal RNA small subunit methyltransferase A from Coxiella burnetii (strain CbuG_Q212) (Coxiella burnetii (strain Q212)).